Consider the following 363-residue polypeptide: Protein-glutamate methylesterase/protein-glutamine glutaminase 3 (363 aa).

Positions 8–125 (KVLCVDDSAL…RDGMLDYAEK (118 aa)) constitute a Response regulatory domain. At Asp-59 the chain carries 4-aspartylphosphate. The CheB-type methylesterase domain maps to 164 to 356 (LVSTEKLIII…RRVMARLATM (193 aa)). Catalysis depends on residues Ser-176, His-202, and Asp-298.

Belongs to the CheB family. In terms of processing, phosphorylated by CheA. Phosphorylation of the N-terminal regulatory domain activates the methylesterase activity.

The protein resides in the cytoplasm. It carries out the reaction [protein]-L-glutamate 5-O-methyl ester + H2O = L-glutamyl-[protein] + methanol + H(+). The catalysed reaction is L-glutaminyl-[protein] + H2O = L-glutamyl-[protein] + NH4(+). Functionally, involved in chemotaxis. Part of a chemotaxis signal transduction system that modulates chemotaxis in response to various stimuli. Catalyzes the demethylation of specific methylglutamate residues introduced into the chemoreceptors (methyl-accepting chemotaxis proteins or MCP) by CheR. Also mediates the irreversible deamidation of specific glutamine residues to glutamic acid. The sequence is that of Protein-glutamate methylesterase/protein-glutamine glutaminase 3 from Burkholderia lata (strain ATCC 17760 / DSM 23089 / LMG 22485 / NCIMB 9086 / R18194 / 383).